The sequence spans 491 residues: Aspartyl/glutamyl-tRNA(Asn/Gln) amidotransferase subunit B (491 aa).

This sequence belongs to the GatB/GatE family. GatB subfamily. In terms of assembly, heterotrimer of A, B and C subunits.

It carries out the reaction L-glutamyl-tRNA(Gln) + L-glutamine + ATP + H2O = L-glutaminyl-tRNA(Gln) + L-glutamate + ADP + phosphate + H(+). The enzyme catalyses L-aspartyl-tRNA(Asn) + L-glutamine + ATP + H2O = L-asparaginyl-tRNA(Asn) + L-glutamate + ADP + phosphate + 2 H(+). Its function is as follows. Allows the formation of correctly charged Asn-tRNA(Asn) or Gln-tRNA(Gln) through the transamidation of misacylated Asp-tRNA(Asn) or Glu-tRNA(Gln) in organisms which lack either or both of asparaginyl-tRNA or glutaminyl-tRNA synthetases. The reaction takes place in the presence of glutamine and ATP through an activated phospho-Asp-tRNA(Asn) or phospho-Glu-tRNA(Gln). This is Aspartyl/glutamyl-tRNA(Asn/Gln) amidotransferase subunit B from Parasynechococcus marenigrum (strain WH8102).